A 354-amino-acid polypeptide reads, in one-letter code: Nucleoporin seh1 (354 aa).

WD repeat units follow at residues 10-49 (DHKDVIHDVVFDYYGRRMATCSSDQTVKIWDEDGQGKWNV), 55-96 (AHSG…KVSS), 112-153 (DSRT…NLSQ), 161-209 (SNKL…RKCV), 216-259 (DITD…TDIS), and 270-309 (EHNCPVWRVCWNMLATMLISTGDDGCVRLWRMNYNRQWRC).

This sequence belongs to the WD repeat SEC13 family. Probable component of the nuclear pore complex (NPC). Component of the GATOR complex consisting of mio, Nup44A/Seh1, Im11, Nplr3, Nplr2, Wdr24, Wdr59 and Sec13. Within the GATOR complex, probable component of the GATOR2 subcomplex which is likely composed of mio, Nup44A/Seh1, Wdr24, Wdr59 and Sec13. Interacts with mio. Interacts with Wdr24. The GATOR2 complex associates with unmet in the absence of S-adenosyl-L-methionine; the mio-Wdr24-Nup44A subcomplex is essential and sufficient for this interaction while Wdr59 and Sec13 are dispensable. This association acts as a nutrient sensor to inhibit mTORC1 signaling in the absence of methionine. In terms of tissue distribution, expressed in ovarian cysts.

The protein localises to the nucleus envelope. Its subcellular location is the lysosome. Functionally, probable component of the nuclear pore complex (NPC). Involved in maintaining the localization of another nucleoporin Mgtor to the nuclear envelope of early meiotic female germline cells. It is not involved in recruiting the nucleoporins Mgtor, Nup107, Nup153 and FG-containing nucleoporins to the NPC. An essential component of the GATOR subcomplex GATOR2 which functions as an activator of the amino acid-sensing branch of the mTORC1 signaling pathway. The two GATOR subcomplexes, GATOR1 and GATOR2, regulate the mTORC1 pathway in order to mediate metabolic homeostasis, female gametogenesis and the response to amino acid limitation and complete starvation. GATOR2 activates the mTORC1 signaling pathway through the inhibition of the GATOR1 subcomplex, controlling the switch to cell proliferation growth under nutrient replete conditions and growth during female oocyte development. This component is required for activating mTORC1 specifically in germline cells to promote cell growth and maintain the oocyte fate, probably influences the organization and/or function of microtubules within ovarian cysts, and promotes accumulation of another GATOR2 complex member mio in germline and somatic tissues. GATOR1 and GATOR2 act at different stages of oogenesis to regulate mTORC1 in order to control meiotic entry and promote oocyte growth and development. After exactly four mitotic cyst divisions, the GATOR1 complex members (Iml1, Nprl2 and Nprl3) down-regulate mTORC1 to slow cellular metabolism and promote the mitotic/meiotic transition. At later stages of oogenesis, the mio and Nup44A components of the GATOR2 complex inhibit GATOR1 and thus activate mTORC1 to promote meiotic progression, and drive oocyte growth and development. In addition to its role in the regulation of the mTORC1 complex, functions independently of mTORC1 to prevent the inappropriate accumulation of autolysosomes in germline tissues. In Drosophila melanogaster (Fruit fly), this protein is Nucleoporin seh1.